Here is a 362-residue protein sequence, read N- to C-terminus: 3-isopropylmalate dehydrogenase (362 aa).

NAD(+) is bound at residue 77-88 (GPKWGTGAVRPE). Residues Arg-95, Arg-105, Arg-134, and Asp-223 each coordinate substrate. Residues Asp-223, Asp-248, and Asp-252 each contribute to the Mg(2+) site. 287 to 298 (GSAPDLPKGKVN) is a binding site for NAD(+).

The protein belongs to the isocitrate and isopropylmalate dehydrogenases family. Homodimer. The cofactor is Mg(2+). It depends on Mn(2+) as a cofactor.

The protein resides in the cytoplasm. It carries out the reaction (2R,3S)-3-isopropylmalate + NAD(+) = 4-methyl-2-oxopentanoate + CO2 + NADH. Its pathway is amino-acid biosynthesis; L-leucine biosynthesis; L-leucine from 3-methyl-2-oxobutanoate: step 3/4. Catalyzes the oxidation of 3-carboxy-2-hydroxy-4-methylpentanoate (3-isopropylmalate) to 3-carboxy-4-methyl-2-oxopentanoate. The product decarboxylates to 4-methyl-2 oxopentanoate. In Zygosaccharomyces bailii, this protein is 3-isopropylmalate dehydrogenase (LEU2).